A 426-amino-acid chain; its full sequence is Serine--tRNA ligase (426 aa).

230-232 (TSE) serves as a coordination point for L-serine. 261–263 (RKE) contributes to the ATP binding site. An L-serine-binding site is contributed by E284. 348-351 (EISS) serves as a coordination point for ATP. L-serine is bound at residue S385.

This sequence belongs to the class-II aminoacyl-tRNA synthetase family. Type-1 seryl-tRNA synthetase subfamily. As to quaternary structure, homodimer. The tRNA molecule binds across the dimer.

It localises to the cytoplasm. It carries out the reaction tRNA(Ser) + L-serine + ATP = L-seryl-tRNA(Ser) + AMP + diphosphate + H(+). The enzyme catalyses tRNA(Sec) + L-serine + ATP = L-seryl-tRNA(Sec) + AMP + diphosphate + H(+). It functions in the pathway aminoacyl-tRNA biosynthesis; selenocysteinyl-tRNA(Sec) biosynthesis; L-seryl-tRNA(Sec) from L-serine and tRNA(Sec): step 1/1. Functionally, catalyzes the attachment of serine to tRNA(Ser). Is also able to aminoacylate tRNA(Sec) with serine, to form the misacylated tRNA L-seryl-tRNA(Sec), which will be further converted into selenocysteinyl-tRNA(Sec). The chain is Serine--tRNA ligase from Wolbachia pipientis subsp. Culex pipiens (strain wPip).